A 342-amino-acid polypeptide reads, in one-letter code: Ferredoxin--NADP reductase (342 aa).

Cys17, Asp36, Gln44, Tyr49, Val89, Phe124, Asp289, and Thr330 together coordinate FAD.

This sequence belongs to the ferredoxin--NADP reductase type 2 family. As to quaternary structure, homodimer. Requires FAD as cofactor.

The enzyme catalyses 2 reduced [2Fe-2S]-[ferredoxin] + NADP(+) + H(+) = 2 oxidized [2Fe-2S]-[ferredoxin] + NADPH. The protein is Ferredoxin--NADP reductase of Bradyrhizobium diazoefficiens (strain JCM 10833 / BCRC 13528 / IAM 13628 / NBRC 14792 / USDA 110).